The primary structure comprises 370 residues: sn-glycerol-3-phosphate import ATP-binding protein UgpC (370 aa).

The 232-residue stretch at L4–L235 folds into the ABC transporter domain. An ATP-binding site is contributed by G37 to S44.

The protein belongs to the ABC transporter superfamily. sn-glycerol-3-phosphate importer (TC 3.A.1.1.3) family. The complex is composed of two ATP-binding proteins (UgpC), two transmembrane proteins (UgpA and UgpE) and a solute-binding protein (UgpB).

The protein localises to the cell inner membrane. It catalyses the reaction sn-glycerol 3-phosphate(out) + ATP + H2O = sn-glycerol 3-phosphate(in) + ADP + phosphate + H(+). Functionally, part of the ABC transporter complex UgpBAEC involved in sn-glycerol-3-phosphate (G3P) import. Responsible for energy coupling to the transport system. This chain is sn-glycerol-3-phosphate import ATP-binding protein UgpC, found in Chromohalobacter salexigens (strain ATCC BAA-138 / DSM 3043 / CIP 106854 / NCIMB 13768 / 1H11).